The primary structure comprises 160 residues: Major pollen allergen Cor a 1 isoforms 5, 6, 11 and 16 (160 aa).

This sequence belongs to the BetVI family.

The chain is Major pollen allergen Cor a 1 isoforms 5, 6, 11 and 16 from Corylus avellana (European hazel).